A 188-amino-acid polypeptide reads, in one-letter code: UPF0301 protein CPn_0139/CP_0633/CPj0139/CpB0140 (188 aa).

The protein belongs to the UPF0301 (AlgH) family.

This is UPF0301 protein CPn_0139/CP_0633/CPj0139/CpB0140 from Chlamydia pneumoniae (Chlamydophila pneumoniae).